The chain runs to 203 residues: MTAIKELKAVARPRAGKGAARAERRAGRVPAVIYGEKQEPVTISLNFREINKTIYAGHFLTTLFEIDVDGTKHRVIPRDYQLDVVKDFPLHVDFLRVSQGATVTVEVPVHFLNQEASPALKAGGTLNVVAHAVELECPAESIPASVEVDLTGAAYGDTFHLSGIKLPAGVTWAGHGDDTLATVVAPSGQADAAAEDAAEAAKA.

This sequence belongs to the bacterial ribosomal protein bL25 family. CTC subfamily. In terms of assembly, part of the 50S ribosomal subunit; part of the 5S rRNA/L5/L18/L25 subcomplex. Contacts the 5S rRNA. Binds to the 5S rRNA independently of L5 and L18.

This is one of the proteins that binds to the 5S RNA in the ribosome where it forms part of the central protuberance. The polypeptide is Large ribosomal subunit protein bL25 (Xanthobacter autotrophicus (strain ATCC BAA-1158 / Py2)).